The sequence spans 388 residues: uncharacterized protein (388 aa).

The protein belongs to the glycosyltransferase 28 family.

This is an uncharacterized protein from Methanosarcina acetivorans (strain ATCC 35395 / DSM 2834 / JCM 12185 / C2A).